Consider the following 245-residue polypeptide: Balbiani ring A 28 kDa protein (245 aa).

A signal peptide spans 1–16 (MKSIIKHILFVVLLIS). Phosphoserine occurs at positions 33, 40, 92, 93, and 115.

In terms of tissue distribution, salivary gland.

It is found in the secreted. Its function is as follows. Used by the larvae to construct a supramolecular structure, the larval tube. This is Balbiani ring A 28 kDa protein from Chironomus thummi thummi (Midge).